The primary structure comprises 258 residues: MSAYPRSYNPFDEDAEDEDARPAPWSDSRDLADGPGAPADRQQALRQEVLRRAEATAASTGRSLSLMYESERIGVVSAEELVRQRGALERTEKMVDKMEQDLKTSQKHINSIKSVFGGLVNYFRSKPAETPSAQNGTLTPQPSGRLKDAINSSKEQEAQYQASHPNLRKLQDSDSIPGGAGSAVSSEAYPRNPHLRACHQRIDSNLDELSVGLGRLKDIALGIQTEIDEQDDILDRLTSKVDKLDVSITSTERKVRQL.

The tract at residues 1–43 is disordered; the sequence is MSAYPRSYNPFDEDAEDEDARPAPWSDSRDLADGPGAPADRQQ. Phosphoserine is present on residues Ser65, Ser77, and Ser114. Residues 76–107 are a coiled coil; it reads VSAEELVRQRGALERTEKMVDKMEQDLKTSQK. Disordered stretches follow at residues 127–147 and 161–188; these read PAET…GRLK and QASH…SSEA. Residues Thr130 and Thr137 each carry the phosphothreonine modification. Positions 131-142 are enriched in polar residues; it reads PSAQNGTLTPQP. 5 positions are modified to phosphoserine: Ser163, Ser182, Ser185, Ser204, and Ser210. Residues 196 to 258 enclose the t-SNARE coiled-coil homology domain; it reads RACHQRIDSN…TSTERKVRQL (63 aa).

It belongs to the SNAP-25 family. In terms of assembly, forms a SNARE complex, composed of VAMP8, SNAP29 and STX17, involved in fusion of autophagosome with lysosome. Interacts with multiple syntaxins including STX6. Interacts with EIPR1. Interacts with STX17; this interaction is increased in the absence of TMEM39A.

The protein resides in the cytoplasm. Its subcellular location is the golgi apparatus membrane. It localises to the cytoplasmic vesicle. It is found in the autophagosome membrane. The protein localises to the cell projection. The protein resides in the cilium membrane. Functionally, SNAREs, soluble N-ethylmaleimide-sensitive factor-attachment protein receptors, are essential proteins for fusion of cellular membranes. SNAREs localized on opposing membranes assemble to form a trans-SNARE complex, an extended, parallel four alpha-helical bundle that drives membrane fusion. SNAP29 is a SNARE involved in autophagy through the direct control of autophagosome membrane fusion with the lysososome membrane. Also plays a role in ciliogenesis by regulating membrane fusions. In Bos taurus (Bovine), this protein is Synaptosomal-associated protein 29.